Reading from the N-terminus, the 601-residue chain is MEGADLLTAGVLFLFAAVAAVPLAARLGIGAVLGYLLAGIAIGPWGLGFISDVDEILHFSELGVVFLMFIIGLELNPSRLWQLRRSIFGVGAAQVLLSAAVLAGLLMLADFLWQAAVVGGIGLAMSSTAMALQLMREKGMNRSESGQLGFSVLLFQDLAVIPALALVPLLAGSADEHFDWFKVAMKVLAFAVMLIGGRYLLRPVFRFIAASGVREVFTAATLLLVLSAALFMDALGLSMALGTFIAGVLLAESEYRHELENAIDPFKGLLLGLFFISVGMSLNLGVLYTHLLWVAASVVILVVIKMLTLYLLARLYGIRSSERMQFASVLSQGGEFAFVLFSTASSQRLFQGDQMALLLVTVTLSMMTTPLLMKGIDKWLSRRLNGPEENDEKPWVEDDKPQVIVVGFGRFGQVIARLLMANKMRITVLERDIGAVNLMRKYGYKVYYGDATQVELLRSAGAEAAESIVITCNEPEDTMKLVALCQQHFPHLHILARARGRVEAHELLQAGVTQFSRETFSSALELGRKTLVSLGMHPHQAQRAQLHFRRLDMRMLRELIPEHSDMVQISRAREARRELEEIFQREMQQERRQLDGWDEFE.

13 helical membrane passes run 4–24 (ADLLTAGVLFLFAAVAAVPLA), 29–49 (IGAVLGYLLAGIAIGPWGLGF), 55–75 (EILHFSELGVVFLMFIIGLEL), 87–107 (IFGVGAAQVLLSAAVLAGLLM), 111–131 (FLWQAAVVGGIGLAMSSTAMA), 152–172 (VLLFQDLAVIPALALVPLLAG), 177–197 (HFDWFKVAMKVLAFAVMLIGG), 207–227 (FIAASGVREVFTAATLLLVLS), 230–250 (LFMDALGLSMALGTFIAGVLL), 262–282 (AIDPFKGLLLGLFFISVGMSL), 284–304 (LGVLYTHLLWVAASVVILVVI), 324–344 (MQFASVLSQGGEFAFVLFSTA), and 356–376 (ALLLVTVTLSMMTTPLLMKGI). Residues 400 to 519 (KPQVIVVGFG…AGVTQFSRET (120 aa)) enclose the RCK N-terminal domain.

This sequence belongs to the monovalent cation:proton antiporter 2 (CPA2) transporter (TC 2.A.37) family. KefB subfamily. Interacts with the regulatory subunit KefG.

Its subcellular location is the cell inner membrane. Functionally, pore-forming subunit of a potassium efflux system that confers protection against electrophiles. Catalyzes K(+)/H(+) antiport. In Salmonella paratyphi B (strain ATCC BAA-1250 / SPB7), this protein is Glutathione-regulated potassium-efflux system protein KefB.